Consider the following 188-residue polypeptide: Putative manganese efflux pump MntP (188 aa).

6 helical membrane passes run 3-23 (LYAL…VALA), 35-55 (IAAT…AGWV), 63-83 (FISE…GLKM), 104-126 (WMTV…GLAF), 140-160 (MAAT…GVLF), and 167-187 (AGGL…LGLI).

This sequence belongs to the MntP (TC 9.B.29) family.

Its subcellular location is the cell inner membrane. Functionally, probably functions as a manganese efflux pump. The chain is Putative manganese efflux pump MntP from Neisseria gonorrhoeae (strain ATCC 700825 / FA 1090).